A 152-amino-acid polypeptide reads, in one-letter code: uncharacterized protein (152 aa).

This is an uncharacterized protein from Escherichia coli (Bacteriophage T4).